A 314-amino-acid polypeptide reads, in one-letter code: Taste receptor type 2 member 42 (314 aa).

At 1-7 (MATEMDK) the chain is on the extracellular side. The chain crosses the membrane as a helical span at residues 8–28 (IFLTLATVEFIIGMLGNVFIG). Residues 29-50 (LVNCSEGIKNQKVFSVDFILTC) lie on the Cytoplasmic side of the membrane. Residues 51–71 (LAISTIGHLLVILFDSCVVGL) traverse the membrane as a helical segment. Residues 72-101 (APHLYATDRVRRPVTMLWHMXNHLTTWLAT) are Extracellular-facing. A helical transmembrane segment spans residues 102–122 (CLSIFYFFKIAHFPHSLFLWL). Residues 123–127 (RWRMN) lie on the Cytoplasmic side of the membrane. A helical transmembrane segment spans residues 128 to 148 (RVIAILLTLSLFLLIFDCLVL). Over 149–187 (EMFIDXSLNIIDKSNLTLYLDESKTPYDKLSLLKILLSL) the chain is Extracellular. Asn-163 carries N-linked (GlcNAc...) asparagine glycosylation. The helical transmembrane segment at 188-208 (NSFIPFSLCLTSLLFLFLSLV) threads the bilayer. Over 209-238 (RHTRNLKLSSLGSRDSSTEAHRRAMKMVMS) the chain is Cytoplasmic. A helical transmembrane segment spans residues 239-259 (LLFLFIVHFFSLQVANWTFCI). At 260 to 265 (LGNNKY) the chain is on the extracellular side. The chain crosses the membrane as a helical span at residues 266–286 (TQFVTLALHAFPSCHSFILIL). The Cytoplasmic segment spans residues 287 to 314 (GNSKLRQTAVRLLWHLRNYTKRPNPLPL).

Belongs to the G-protein coupled receptor T2R family.

It is found in the membrane. Functionally, receptor that may play a role in the perception of bitterness and is gustducin-linked. May play a role in sensing the chemical composition of the gastrointestinal content. The activity of this receptor may stimulate alpha gustducin, mediate PLC-beta-2 activation and lead to the gating of TRPM5. The chain is Taste receptor type 2 member 42 (TAS2R42) from Macaca mulatta (Rhesus macaque).